The primary structure comprises 270 residues: MHLDSLVAPLVEQASAILDAATALFLVGHRADSAVRKKGNDFATEVDLAIERQVVAALVAATGIEVHGEEFGGPAVDSRWVWVLDPIDGTINYAAGSPLAAILLGLLHDGVPVAGLTWMPFTDPRYTAVAGGPLIKNGVPQPPLADAELANVLVGVGTFSADSRGQFPGRYRLAVLEKLSRVSSRLRMHGSTGIDLVFVADGILGGAISFGGHVWDHAAGVALVRAAGGVVTDLAGQPWTPASRSALAGPPRVHAQILEILGSIGEPEDY.

Glu-69, Asp-85, Ile-87, and Asp-88 together coordinate Mg(2+). Residue Glu-69 coordinates substrate. Substrate-binding positions include 87 to 90, Arg-187, and Asp-216; that span reads IDGT. Asp-216 lines the Mg(2+) pocket.

This sequence belongs to the inositol monophosphatase superfamily. The cofactor is Mg(2+).

It carries out the reaction a myo-inositol phosphate + H2O = myo-inositol + phosphate. Its pathway is polyol metabolism; myo-inositol biosynthesis; myo-inositol from D-glucose 6-phosphate: step 2/2. Its function is as follows. Catalyzes the dephosphorylation of inositol 1-phosphate (I-1-P) to yield free myo-inositol, a key metabolite in mycobacteria. This chain is Probable inositol 1-monophosphatase ImpA (impA), found in Mycobacterium tuberculosis (strain ATCC 25618 / H37Rv).